Here is a 342-residue protein sequence, read N- to C-terminus: D-erythrose-4-phosphate dehydrogenase (342 aa).

Arginine 12–isoleucine 13 is a binding site for NAD(+). Residues serine 154–threonine 156, arginine 200, threonine 213–lysine 214, and arginine 236 each bind substrate. Cysteine 155 (nucleophile) is an active-site residue. Asparagine 318 is a binding site for NAD(+).

This sequence belongs to the glyceraldehyde-3-phosphate dehydrogenase family. Epd subfamily. In terms of assembly, homotetramer.

It is found in the cytoplasm. The enzyme catalyses D-erythrose 4-phosphate + NAD(+) + H2O = 4-phospho-D-erythronate + NADH + 2 H(+). It functions in the pathway cofactor biosynthesis; pyridoxine 5'-phosphate biosynthesis; pyridoxine 5'-phosphate from D-erythrose 4-phosphate: step 1/5. In terms of biological role, catalyzes the NAD-dependent conversion of D-erythrose 4-phosphate to 4-phosphoerythronate. The sequence is that of D-erythrose-4-phosphate dehydrogenase from Salmonella arizonae (strain ATCC BAA-731 / CDC346-86 / RSK2980).